We begin with the raw amino-acid sequence, 532 residues long: Glucose-6-phosphate isomerase (532 aa).

Catalysis depends on E330, which acts as the Proton donor. Active-site residues include H359 and K460.

Belongs to the GPI family.

It is found in the cytoplasm. It carries out the reaction alpha-D-glucose 6-phosphate = beta-D-fructose 6-phosphate. It functions in the pathway carbohydrate biosynthesis; gluconeogenesis. The protein operates within carbohydrate degradation; glycolysis; D-glyceraldehyde 3-phosphate and glycerone phosphate from D-glucose: step 2/4. In terms of biological role, catalyzes the reversible isomerization of glucose-6-phosphate to fructose-6-phosphate. The sequence is that of Glucose-6-phosphate isomerase from Prochlorococcus marinus (strain MIT 9211).